The primary structure comprises 203 residues: MSPLTQTLLMILAAYLAGSISSAVLVCRMRGLPDPRLQGSGNPGATNVLRIGGASSAAMVLFFDMLKGAVPSYLAYLMGIDAVSLGLIAIAACLGHIYPVFFGFKGGKGVATAFGAMAPIGDDLAICLMASWVVLLLISRYSSLAAILTALLAPLYTWWLDDRFTIPVAMLSTLIIIRHKDNIQRLLKGEESKVSRKKRPKKS.

A run of 4 helical transmembrane segments spans residues 7–27 (TLLM…VLVC), 82–102 (AVSL…PVFF), 118–138 (APIG…LLLI), and 141–161 (YSSL…WWLD).

Belongs to the PlsY family. In terms of assembly, probably interacts with PlsX.

The protein resides in the cell inner membrane. It catalyses the reaction an acyl phosphate + sn-glycerol 3-phosphate = a 1-acyl-sn-glycero-3-phosphate + phosphate. It participates in lipid metabolism; phospholipid metabolism. Functionally, catalyzes the transfer of an acyl group from acyl-phosphate (acyl-PO(4)) to glycerol-3-phosphate (G3P) to form lysophosphatidic acid (LPA). This enzyme utilizes acyl-phosphate as fatty acyl donor, but not acyl-CoA or acyl-ACP. This is Glycerol-3-phosphate acyltransferase from Shewanella baltica (strain OS223).